A 539-amino-acid polypeptide reads, in one-letter code: uncharacterized protein (539 aa).

Residues Ala34–Asp63 form a disordered region. Helical transmembrane passes span Phe103–Phe123, Met141–Val161, Ile184–Leu204, Gly244–Asn264, Phe277–Ile299, Leu325–Phe345, Val360–Ala380, Thr399–Leu419, Val434–Thr454, Ile470–Leu490, and Trp496–Glu516.

It belongs to the multi antimicrobial extrusion (MATE) (TC 2.A.66.1) family.

The protein resides in the vacuole membrane. This is an uncharacterized protein from Schizosaccharomyces pombe (strain 972 / ATCC 24843) (Fission yeast).